The chain runs to 998 residues: UPF0182 protein AAur_2732 (998 aa).

7 helical membrane-spanning segments follow: residues 18 to 38 (GALT…IFFA), 64 to 84 (IITF…AIRI), 115 to 135 (VVMI…AASQ), 168 to 188 (FLGF…IAGI), 211 to 231 (QIHI…NFWL), 260 to 280 (AILA…AIIG), and 287 to 307 (IGTA…PWVI). Disordered stretches follow at residues 490–518 (GAPD…TFSG), 888–923 (LFGG…PTDA), and 971–998 (QARL…SPSS). Positions 496 to 509 (PNREQDRPAGREGG) are enriched in basic and acidic residues. Residues 908-919 (TSPPGTTPPPAG) show a composition bias toward pro residues. Over residues 976-990 (ATPAPTATPGATPSA) the composition is skewed to low complexity.

Belongs to the UPF0182 family.

The protein resides in the cell membrane. The sequence is that of UPF0182 protein AAur_2732 from Paenarthrobacter aurescens (strain TC1).